A 60-amino-acid chain; its full sequence is Large ribosomal subunit protein uL30 (60 aa).

It belongs to the universal ribosomal protein uL30 family. As to quaternary structure, part of the 50S ribosomal subunit.

In Leuconostoc mesenteroides subsp. mesenteroides (strain ATCC 8293 / DSM 20343 / BCRC 11652 / CCM 1803 / JCM 6124 / NCDO 523 / NBRC 100496 / NCIMB 8023 / NCTC 12954 / NRRL B-1118 / 37Y), this protein is Large ribosomal subunit protein uL30.